The following is a 586-amino-acid chain: Eukaryotic translation initiation factor 3 subunit D (586 aa).

Disordered stretches follow at residues 16–37 (EDSW…YAPF) and 104–176 (KRTF…REPS). The span at 108-131 (GRGGGTVFRGRAQRGGAGQRGGRA) shows a compositional bias: gly residues. A compositionally biased stretch (basic and acidic residues) spans 162 to 174 (GWKDYDKPQRTRE). The RNA gate stretch occupies residues 301–315 (SIDLVTVNENAADAP). Positions 563 to 586 (ANTFEEDDEAADEQEEKATEESEE) are disordered. A compositionally biased stretch (acidic residues) spans 566 to 577 (FEEDDEAADEQE).

This sequence belongs to the eIF-3 subunit D family. As to quaternary structure, component of the eukaryotic translation initiation factor 3 (eIF-3) complex.

It localises to the cytoplasm. Functionally, mRNA cap-binding component of the eukaryotic translation initiation factor 3 (eIF-3) complex, which is involved in protein synthesis of a specialized repertoire of mRNAs and, together with other initiation factors, stimulates binding of mRNA and methionyl-tRNAi to the 40S ribosome. The eIF-3 complex specifically targets and initiates translation of a subset of mRNAs involved in cell proliferation. In the eIF-3 complex, eif3d specifically recognizes and binds the 7-methylguanosine cap of a subset of mRNAs. This Aspergillus clavatus (strain ATCC 1007 / CBS 513.65 / DSM 816 / NCTC 3887 / NRRL 1 / QM 1276 / 107) protein is Eukaryotic translation initiation factor 3 subunit D.